The primary structure comprises 749 residues: Triacylglycerol lipase 5 (749 aa).

The HXXXXD acyltransferase motif motif lies at 54–59 (HAISYD). In terms of domain architecture, PNPLA spans 183 to 388 (LVLSGGSTFG…DNDMPISRLS (206 aa)). Positions 214-218 (GSSAG) match the GXSXG motif. S216 serves as the catalytic Nucleophile. Residues N270, N289, N297, N304, and N321 are each glycosylated (N-linked (GlcNAc...) asparagine). The active-site Proton acceptor is the D375. 2 N-linked (GlcNAc...) asparagine glycosylation sites follow: N474 and N589. A disordered region spans residues 585-643 (IKSPNKTAAPGRFPLQPLPSPSSTFNKRKMDMLSPSPSPSTSPQRSKSSFTQQGTRQKA). Residues 623 to 633 (PSTSPQRSKSS) are compositionally biased toward low complexity. Polar residues predominate over residues 634-643 (FTQQGTRQKA). S645 bears the Phosphoserine mark. 3 N-linked (GlcNAc...) asparagine glycosylation sites follow: N680, N714, and N742.

The protein localises to the lipid droplet. It catalyses the reaction a triacylglycerol + H2O = a diacylglycerol + a fatty acid + H(+). The catalysed reaction is 1-(9Z-octadecenoyl)-sn-glycero-3-phosphate + (9Z)-octadecenoyl-CoA = 1,2-di-(9Z-octadecenoyl)-sn-glycero-3-phosphate + CoA. The enzyme catalyses 1-(9Z-octadecenoyl)-sn-glycero-3-phosphate + hexadecanoyl-CoA = 1-hexadecanoyl-2-(9Z-octadecenoyl)-sn-glycero-3-phosphate + CoA. Its activity is regulated as follows. Loses its lipolytic activity in cells lacking nonpolar lipids, but retains its side activity as lysophospholipid acyltransferase. Lipid particle-localized triacylglycerol (TAG) lipase. The lipid droplet/particle is a lipid storage compartment which serves as a depot of energy and building blocks for membrane lipid biosynthesis. Involved in the mobilization of the non-polar storage lipids triacylglycerols (TAGs) from lipid particles by hydrolysis of TAGs, releasing and supplying specific fatty acids to the appropriate metabolic pathways. Also catalyzes the acylation of lysophosphatidic acid (LPA). This Saccharomyces cerevisiae (strain ATCC 204508 / S288c) (Baker's yeast) protein is Triacylglycerol lipase 5 (TGL5).